Consider the following 286-residue polypeptide: Pantothenate synthetase (286 aa).

30–37 (MGNLHAGH) is a binding site for ATP. The active-site Proton donor is the His-37. Gln-61 contributes to the (R)-pantoate binding site. Gln-61 is a binding site for beta-alanine. 149 to 152 (GQKD) contributes to the ATP binding site. Position 155 (Gln-155) interacts with (R)-pantoate. ATP-binding positions include Val-178 and 186–189 (LSSR).

The protein belongs to the pantothenate synthetase family. As to quaternary structure, homodimer.

It is found in the cytoplasm. It carries out the reaction (R)-pantoate + beta-alanine + ATP = (R)-pantothenate + AMP + diphosphate + H(+). Its pathway is cofactor biosynthesis; (R)-pantothenate biosynthesis; (R)-pantothenate from (R)-pantoate and beta-alanine: step 1/1. In terms of biological role, catalyzes the condensation of pantoate with beta-alanine in an ATP-dependent reaction via a pantoyl-adenylate intermediate. The protein is Pantothenate synthetase of Stutzerimonas stutzeri (strain A1501) (Pseudomonas stutzeri).